A 190-amino-acid polypeptide reads, in one-letter code: Large ribosomal subunit protein bL25 (190 aa).

It belongs to the bacterial ribosomal protein bL25 family. CTC subfamily. As to quaternary structure, part of the 50S ribosomal subunit; part of the 5S rRNA/L5/L18/L25 subcomplex. Contacts the 5S rRNA. Binds to the 5S rRNA independently of L5 and L18.

Its function is as follows. This is one of the proteins that binds to the 5S RNA in the ribosome where it forms part of the central protuberance. The polypeptide is Large ribosomal subunit protein bL25 (Neisseria meningitidis serogroup C / serotype 2a (strain ATCC 700532 / DSM 15464 / FAM18)).